Consider the following 396-residue polypeptide: S-adenosylmethionine synthase (396 aa).

Histidine 16 contributes to the ATP binding site. Residue aspartate 18 participates in Mg(2+) binding. K(+) is bound at residue glutamate 44. 2 residues coordinate L-methionine: glutamate 57 and glutamine 100. The interval 100–110 (QSVDIAQGVDR) is flexible loop. Residues 165 to 167 (DAK), 231 to 232 (KF), aspartate 240, 246 to 247 (RK), alanine 263, and lysine 267 each bind ATP. Aspartate 240 is an L-methionine binding site. Lysine 271 lines the L-methionine pocket.

This sequence belongs to the AdoMet synthase family. Homotetramer; dimer of dimers. The cofactor is Mg(2+). K(+) is required as a cofactor.

It is found in the cytoplasm. It catalyses the reaction L-methionine + ATP + H2O = S-adenosyl-L-methionine + phosphate + diphosphate. The protein operates within amino-acid biosynthesis; S-adenosyl-L-methionine biosynthesis; S-adenosyl-L-methionine from L-methionine: step 1/1. Its function is as follows. Catalyzes the formation of S-adenosylmethionine (AdoMet) from methionine and ATP. The overall synthetic reaction is composed of two sequential steps, AdoMet formation and the subsequent tripolyphosphate hydrolysis which occurs prior to release of AdoMet from the enzyme. This chain is S-adenosylmethionine synthase, found in Marinobacter nauticus (strain ATCC 700491 / DSM 11845 / VT8) (Marinobacter aquaeolei).